A 3184-amino-acid chain; its full sequence is Cilia and flagella-associated protein 47 (3184 aa).

Residues 1729-1851 enclose the Calponin-homology (CH) domain; that stretch reads SDSERILLSW…LCVYLYERLP (123 aa). The segment at 2491-2514 is disordered; that stretch reads RDEEESQEETDTEKDFSSQETPSD. Over residues 2493–2502 the composition is skewed to acidic residues; that stretch reads EEESQEETDT.

In terms of assembly, interacts with CFAP65. As to expression, highly expressed in spermatzoa (at protein level).

Its subcellular location is the cytoplasm. The protein resides in the cytoskeleton. The protein localises to the flagellum basal body. Its function is as follows. Plays a role in flagellar formation and sperm motility. This chain is Cilia and flagella-associated protein 47, found in Mus musculus (Mouse).